Reading from the N-terminus, the 493-residue chain is Cobyric acid synthase (493 aa).

In terms of domain architecture, GATase cobBQ-type spans 246–440 (PIDIAVIKMP…IHGVFDGIVF (195 aa)). Residue cysteine 326 is the Nucleophile of the active site. The active site involves histidine 432.

Belongs to the CobB/CobQ family. CobQ subfamily.

The protein operates within cofactor biosynthesis; adenosylcobalamin biosynthesis. Its function is as follows. Catalyzes amidations at positions B, D, E, and G on adenosylcobyrinic A,C-diamide. NH(2) groups are provided by glutamine, and one molecule of ATP is hydrogenolyzed for each amidation. This is Cobyric acid synthase from Clostridium botulinum (strain 657 / Type Ba4).